A 245-amino-acid polypeptide reads, in one-letter code: Gas vesicle protein F (245 aa).

Belongs to the gas vesicle GvpF/GvpL family. As to quaternary structure, binds GvpA.

It is found in the gas vesicle. Its function is as follows. A minor component of the gas vesicle, may be involved in preventing GvpA aggregation during gas vesicle nucleation. Gas vesicles (GV) are hollow, gas filled proteinaceous nanostructures. During planktonic growth they allow positioning of the organism at a favorable depth for light or nutrient acquisition. The chain is Gas vesicle protein F from Dolichospermum flosaquae (Anabaena flos-aquae).